A 163-amino-acid polypeptide reads, in one-letter code: NADH-quinone oxidoreductase subunit I (163 aa).

2 4Fe-4S ferredoxin-type domains span residues 54 to 84 (LRRYPNGEERCIACKLCEAVCPALAITIDSA) and 94 to 123 (TRYDIDLFKCIFCGFCEESCPVDSIVETHI). Residues cysteine 64, cysteine 67, cysteine 70, cysteine 74, cysteine 103, cysteine 106, cysteine 109, and cysteine 113 each contribute to the [4Fe-4S] cluster site.

The protein belongs to the complex I 23 kDa subunit family. NDH-1 is composed of 14 different subunits. Subunits NuoA, H, J, K, L, M, N constitute the membrane sector of the complex. The cofactor is [4Fe-4S] cluster.

It is found in the cell inner membrane. The catalysed reaction is a quinone + NADH + 5 H(+)(in) = a quinol + NAD(+) + 4 H(+)(out). NDH-1 shuttles electrons from NADH, via FMN and iron-sulfur (Fe-S) centers, to quinones in the respiratory chain. The immediate electron acceptor for the enzyme in this species is believed to be ubiquinone. Couples the redox reaction to proton translocation (for every two electrons transferred, four hydrogen ions are translocated across the cytoplasmic membrane), and thus conserves the redox energy in a proton gradient. In Xanthomonas oryzae pv. oryzae (strain KACC10331 / KXO85), this protein is NADH-quinone oxidoreductase subunit I.